A 270-amino-acid chain; its full sequence is Checkpoint signal transducer rad25 (270 aa).

Phosphoserine occurs at positions 234 and 253. The disordered stretch occupies residues 240–270 (QSAKEEAPAAAAASENEHPEPKESTTDTVKA). A compositionally biased stretch (basic and acidic residues) spans 254–270 (ENEHPEPKESTTDTVKA).

Belongs to the 14-3-3 family. Interacts with rad24. Interacts with byr2.

It is found in the cytoplasm. Its function is as follows. Acts in cell cycle and stress checkpoint signaling by sequestering signal transducers regulated by the checkpoints. Required for the DNA damage checkpoint that ensures that DNA damage is repaired before mitosis is attempted. Sequesters byr2 in the cytoplasm to prevent its translocation to the plasma membrane. The protein is Checkpoint signal transducer rad25 of Schizosaccharomyces pombe (strain 972 / ATCC 24843) (Fission yeast).